The sequence spans 330 residues: MPQTRLTDRFGRTVNYVRLSVTDRCDFRCVYCMAEDMTFLPRQQVLTLEEIARLARNFVALGTEKIRLTGGEPLVRRDILELVREVGTYGLRDFAMTTNGSQLPTMAESLRKAGLQRLNISLDSLDADKFRAITRTGNLSQVLDGIDAARDAGFRGIKLNTVVMKGRNDEEIPELIEFARQKQVDISFIEEMPLGEISEHDRGLALCTSEEVRDIIRRHHELIPATEDSGGPARYFRMPDSEVRVGFISPHSHNFCSTCNRVRVTVEGRLLLCLGNEHSVDLRRVLRGHPVTDDKLQEAIIKAMDLKPERHHFSSNGDVQILRFMNTTGG.

The 217-residue stretch at Arg-9–Ala-225 folds into the Radical SAM core domain. Arg-18 is a GTP binding site. [4Fe-4S] cluster-binding residues include Cys-25 and Cys-29. Residue Tyr-31 participates in S-adenosyl-L-methionine binding. Cys-32 provides a ligand contact to [4Fe-4S] cluster. Arg-67 is a binding site for GTP. An S-adenosyl-L-methionine-binding site is contributed by Gly-71. Thr-97 serves as a coordination point for GTP. Ser-121 contacts S-adenosyl-L-methionine. Lys-158 contacts GTP. An S-adenosyl-L-methionine-binding site is contributed by Met-192. Cys-256 and Cys-259 together coordinate [4Fe-4S] cluster. A GTP-binding site is contributed by Arg-261–Arg-263. Cys-273 is a [4Fe-4S] cluster binding site.

It belongs to the radical SAM superfamily. MoaA family. As to quaternary structure, monomer and homodimer. [4Fe-4S] cluster serves as cofactor.

The enzyme catalyses GTP + AH2 + S-adenosyl-L-methionine = (8S)-3',8-cyclo-7,8-dihydroguanosine 5'-triphosphate + 5'-deoxyadenosine + L-methionine + A + H(+). It functions in the pathway cofactor biosynthesis; molybdopterin biosynthesis. Catalyzes the cyclization of GTP to (8S)-3',8-cyclo-7,8-dihydroguanosine 5'-triphosphate. This is GTP 3',8-cyclase from Marinobacter nauticus (strain ATCC 700491 / DSM 11845 / VT8) (Marinobacter aquaeolei).